A 328-amino-acid polypeptide reads, in one-letter code: Adenosine receptor A1 (328 aa).

The Extracellular portion of the chain corresponds to 1 to 10 (MPPSISAFQA). The helical transmembrane segment at 11–33 (AYIGIEVLIALVSVPGNVLVIWA) threads the bilayer. Residues 34-46 (VKVNQALRDATFC) lie on the Cytoplasmic side of the membrane. The chain crosses the membrane as a helical span at residues 47 to 69 (FIVSLAVADVAVGALVIPLAILI). Topologically, residues 70–80 (NIGPETYFHTC) are extracellular. Cys80 and Cys169 are disulfide-bonded. A helical transmembrane segment spans residues 81–102 (LMVACPVLILTQSSILALLAIA). The Cytoplasmic portion of the chain corresponds to 103–123 (VDRYLRVKIPLRYKAVVTPRR). Residues 124 to 146 (AAVAIAGCWILSLVVGLTPMFGW) traverse the membrane as a helical segment. Residues 147-176 (NNLREVQRAWAANGSVGEPVIKCEFEKVIS) are Extracellular-facing. An N-linked (GlcNAc...) asparagine glycan is attached at Asn159. A helical transmembrane segment spans residues 177–201 (MEYMVYFNFFVWVLPPLLLMVLIYL). Topologically, residues 202–235 (EVFYLIRRQLSKKASASSGDPHKYYGKELKIAKS) are cytoplasmic. Residues 236–259 (LALILFLFALSWLPLHILNCVTLF) traverse the membrane as a helical segment. Residues 260–267 (CPSCQKPS) are Extracellular-facing. Residues 268-292 (ILVYTAIFLTHGNSAMNPIVYAFRI) traverse the membrane as a helical segment. The Cytoplasmic portion of the chain corresponds to 293 to 328 (HKFRVTFLKIWNDHFRCRPAPAGDGDEDLPEEKPND). Cys309 is lipidated: S-palmitoyl cysteine.

The protein belongs to the G-protein coupled receptor 1 family.

It is found in the cell membrane. In terms of biological role, receptor for adenosine. The activity of this receptor is mediated by G proteins which inhibit adenylyl cyclase. The chain is Adenosine receptor A1 (ADORA1) from Oryctolagus cuniculus (Rabbit).